Here is a 426-residue protein sequence, read N- to C-terminus: MLDLRNVAQNFDAVVARLKTRGGNLDLGPFQRLFAERRELYVSVESLAARRNAANEEMKRKAKEDPKALDALRGDLRAVSQEIKEKEARLKDVEEELNRILLLIPNVPHESVPEGGGAEDNVQVSIWGQKPDLLFAPKQHFELGEKLGMLDFERAAKVSGSRFTFYKGALARLERALVTFMIDVHTSKGYTELLPPYLVLRETMMGTGQLPKFEDDAFKTLGEPERFLIPTAEVPVTNYHADEILEGESLPIRYCAFSPSFRAEAGAAGKDTRGLIRQHQFHKVELVKFAHQEKSLDELEAMTDDACDILRRLGIHHRVMLLCTGDMGFAARKTYDIEVWLPGQNSYREISSCSDCGDFQARRAKIRYRAQRGDKPQLAHTLNGSGLAVGRTTIAILENYQREDGSVAIPEALVPYMGGLKELKPI.

An L-serine-binding site is contributed by T231 to E233. R262–E264 contacts ATP. Residue E285 participates in L-serine binding. E349–S352 serves as a coordination point for ATP. L-serine is bound at residue S385.

It belongs to the class-II aminoacyl-tRNA synthetase family. Type-1 seryl-tRNA synthetase subfamily. In terms of assembly, homodimer. The tRNA molecule binds across the dimer.

The protein resides in the cytoplasm. The enzyme catalyses tRNA(Ser) + L-serine + ATP = L-seryl-tRNA(Ser) + AMP + diphosphate + H(+). It catalyses the reaction tRNA(Sec) + L-serine + ATP = L-seryl-tRNA(Sec) + AMP + diphosphate + H(+). It functions in the pathway aminoacyl-tRNA biosynthesis; selenocysteinyl-tRNA(Sec) biosynthesis; L-seryl-tRNA(Sec) from L-serine and tRNA(Sec): step 1/1. Catalyzes the attachment of serine to tRNA(Ser). Is also able to aminoacylate tRNA(Sec) with serine, to form the misacylated tRNA L-seryl-tRNA(Sec), which will be further converted into selenocysteinyl-tRNA(Sec). This chain is Serine--tRNA ligase, found in Myxococcus xanthus (strain DK1622).